A 358-amino-acid polypeptide reads, in one-letter code: 3-O-methylredipecamine 2-O-methyltransferase IpeOMT3 (358 aa).

Gly193, Asp216, Asp236, Met237, and Lys250 together coordinate S-adenosyl-L-methionine. His254 serves as the catalytic Proton acceptor.

It belongs to the class I-like SAM-binding methyltransferase superfamily. Cation-independent O-methyltransferase family. As to expression, expressed in roots.

It is found in the cytoplasm. It localises to the cytosol. The catalysed reaction is (S)-reticuline + S-adenosyl-L-methionine = (S)-laudanine + S-adenosyl-L-homocysteine + H(+). Its pathway is alkaloid biosynthesis. Its function is as follows. O-methyltransferase involved in the biosynthesis of ipecac and benzylisoquinoline monoterpenoid-isoquinoline alkaloids natural products, starting by the condensation of dopamine and secologanin, and including emetine and cephaeline, drugs used both as anti-protozoal (e.g. treatment of ameobiasis) and as emetic agents. Catalyzes 2-O-methylation of 3-O-methylredipecamine and, with less efficiency, the 7-O-methylation of (S)-coclaurine, (R,S)-N-methylcoclaurine, (R,S)-4'-O-methylcoclaurine, (R,S)-6-O-methyllaudanosoline, nororientaline, (S)-norreticuline and (S)-reticuline. This chain is 3-O-methylredipecamine 2-O-methyltransferase IpeOMT3, found in Carapichea ipecacuanha (Ipecac).